Reading from the N-terminus, the 48-residue chain is Cuticle protein 6 isoform b (48 aa).

The chain is Cuticle protein 6 isoform b from Limulus polyphemus (Atlantic horseshoe crab).